Consider the following 305-residue polypeptide: Glycine--tRNA ligase alpha subunit (305 aa).

Belongs to the class-II aminoacyl-tRNA synthetase family. As to quaternary structure, tetramer of two alpha and two beta subunits.

It is found in the cytoplasm. It carries out the reaction tRNA(Gly) + glycine + ATP = glycyl-tRNA(Gly) + AMP + diphosphate. In Streptococcus thermophilus (strain CNRZ 1066), this protein is Glycine--tRNA ligase alpha subunit.